We begin with the raw amino-acid sequence, 631 residues long: Phosphomethylpyrimidine synthase (631 aa).

Residues N239, M268, Y297, H333, 353 to 355 (SRG), 394 to 397 (DGLR), and E433 each bind substrate. H437 contributes to the Zn(2+) binding site. Y460 is a binding site for substrate. H501 serves as a coordination point for Zn(2+). 3 residues coordinate [4Fe-4S] cluster: C581, C584, and C589.

It belongs to the ThiC family. Homodimer. [4Fe-4S] cluster serves as cofactor.

It catalyses the reaction 5-amino-1-(5-phospho-beta-D-ribosyl)imidazole + S-adenosyl-L-methionine = 4-amino-2-methyl-5-(phosphooxymethyl)pyrimidine + CO + 5'-deoxyadenosine + formate + L-methionine + 3 H(+). The protein operates within cofactor biosynthesis; thiamine diphosphate biosynthesis. Its function is as follows. Catalyzes the synthesis of the hydroxymethylpyrimidine phosphate (HMP-P) moiety of thiamine from aminoimidazole ribotide (AIR) in a radical S-adenosyl-L-methionine (SAM)-dependent reaction. In Salmonella paratyphi B (strain ATCC BAA-1250 / SPB7), this protein is Phosphomethylpyrimidine synthase.